The sequence spans 89 residues: Phosphocarrier protein HPr (89 aa).

The region spanning 1-89 (MERTVTVVPE…DILSTPEAKQ (89 aa)) is the HPr domain. Catalysis depends on histidine 14, which acts as the Pros-phosphohistidine intermediate. Residue serine 47 is modified to Phosphoserine; by HPrK/P.

This sequence belongs to the HPr family.

Its subcellular location is the cytoplasm. With respect to regulation, phosphorylation on Ser-47 inhibits the phosphoryl transfer from enzyme I to HPr. General (non sugar-specific) component of the phosphoenolpyruvate-dependent sugar phosphotransferase system (sugar PTS). This major carbohydrate active-transport system catalyzes the phosphorylation of incoming sugar substrates concomitantly with their translocation across the cell membrane. The phosphoryl group from phosphoenolpyruvate (PEP) is transferred to the phosphoryl carrier protein HPr by enzyme I. Phospho-HPr then transfers it to the PTS EIIA domain. Is involved in fructose transport. The protein is Phosphocarrier protein HPr (ptsH1) of Haloferax volcanii (strain ATCC 29605 / DSM 3757 / JCM 8879 / NBRC 14742 / NCIMB 2012 / VKM B-1768 / DS2) (Halobacterium volcanii).